Consider the following 141-residue polypeptide: Hemoglobin subunit alpha-D (141 aa).

The Globin domain occupies 1-141 (MLTADDKKLI…VAAVLAEKYR (141 aa)). Residues H58 and H87 each coordinate heme b.

This sequence belongs to the globin family. As to quaternary structure, heterotetramer of two alpha-D chains and two beta chains. As to expression, red blood cells.

Involved in oxygen transport from the lung to the various peripheral tissues. This chain is Hemoglobin subunit alpha-D (HBAD), found in Struthio camelus (Common ostrich).